The sequence spans 546 residues: Thermolysin (546 aa).

Residues 1-25 (MDKRAMLGAIGLAFGLMAWPFGASA) form the signal peptide. Residues 26–228 (KEKSMVWNEQ…EAKPGGGQPV (203 aa)) constitute a propeptide, activation peptide. Ca(2+) is bound by residues Asp-287, Asp-289, Gln-291, and Asp-368. Residue His-372 participates in Zn(2+) binding. Residue Glu-373 is part of the active site. Zn(2+) contacts are provided by His-376 and Glu-396. The Ca(2+) site is built by Asn-413, Asp-415, Glu-417, Glu-420, Tyr-423, Thr-424, Ile-427, and Asp-430. The Proton donor role is filled by His-461.

Belongs to the peptidase M4 family. Ca(2+) is required as a cofactor. It depends on Zn(2+) as a cofactor.

Its subcellular location is the secreted. It carries out the reaction Preferential cleavage: Xaa-|-Leu &gt; Xaa-|-Phe.. Its function is as follows. Extracellular zinc metalloprotease. This chain is Thermolysin (npr), found in Bacillus caldolyticus.